Reading from the N-terminus, the 557-residue chain is NADP-dependent malic enzyme (557 aa).

The active-site Proton donor is tyrosine 88. Arginine 141 lines the NADP(+) pocket. The Proton acceptor role is filled by lysine 159. Glutamate 231, aspartate 232, and aspartate 255 together coordinate a divalent metal cation. Aspartate 255 lines the NADP(+) pocket. Serine 322 is subject to Phosphoserine. NADP(+) is bound at residue asparagine 394.

This sequence belongs to the malic enzymes family. In terms of assembly, homotetramer. The cofactor is Mg(2+). Requires Mn(2+) as cofactor.

The protein localises to the cytoplasm. It carries out the reaction (S)-malate + NADP(+) = pyruvate + CO2 + NADPH. The catalysed reaction is oxaloacetate + H(+) = pyruvate + CO2. In terms of biological role, catalyzes the oxidative decarboxylation of (S)-malate in the presence of NADP(+) and divalent metal ions, and decarboxylation of oxaloacetate. This chain is NADP-dependent malic enzyme (ME1), found in Sus scrofa (Pig).